Reading from the N-terminus, the 229-residue chain is MSDFVLELDAIERTYVTEAGELPVLRGASLSLAPGEIVGLVGPSGSGKSSLLHAAGLLERPDAGEVRVRGQATRDLDDRARTAIRRRDIGFVYQFHHLLPEFDALENIVLPQLIAGVPSARARQRAEELLTRLGLAERLLHQPSQLSGGEQQRVAIARALANAPHVLLADEPTGNLDPDTSDTVFAAFRDTVRAEGAAALVATHNHELAGRMDRILTFADGHLTPYVPA.

Residues 6–229 (LELDAIERTY…DGHLTPYVPA (224 aa)) form the ABC transporter domain. 42-49 (GPSGSGKS) is an ATP binding site.

The protein belongs to the ABC transporter superfamily. Lipoprotein translocase (TC 3.A.1.125) family. In terms of assembly, the complex is composed of two ATP-binding proteins (LolD) and two transmembrane proteins (LolC and LolE).

It localises to the cell inner membrane. Part of the ABC transporter complex LolCDE involved in the translocation of mature outer membrane-directed lipoproteins, from the inner membrane to the periplasmic chaperone, LolA. Responsible for the formation of the LolA-lipoprotein complex in an ATP-dependent manner. In Maricaulis maris (strain MCS10) (Caulobacter maris), this protein is Lipoprotein-releasing system ATP-binding protein LolD.